A 616-amino-acid polypeptide reads, in one-letter code: Proline--tRNA ligase (616 aa).

This sequence belongs to the class-II aminoacyl-tRNA synthetase family. ProS type 1 subfamily. Homodimer.

It localises to the cytoplasm. It carries out the reaction tRNA(Pro) + L-proline + ATP = L-prolyl-tRNA(Pro) + AMP + diphosphate. Its function is as follows. Catalyzes the attachment of proline to tRNA(Pro) in a two-step reaction: proline is first activated by ATP to form Pro-AMP and then transferred to the acceptor end of tRNA(Pro). As ProRS can inadvertently accommodate and process non-cognate amino acids such as alanine and cysteine, to avoid such errors it has two additional distinct editing activities against alanine. One activity is designated as 'pretransfer' editing and involves the tRNA(Pro)-independent hydrolysis of activated Ala-AMP. The other activity is designated 'posttransfer' editing and involves deacylation of mischarged Ala-tRNA(Pro). The misacylated Cys-tRNA(Pro) is not edited by ProRS. The chain is Proline--tRNA ligase from Lactococcus lactis subsp. cremoris (strain MG1363).